The chain runs to 209 residues: Octanoyltransferase (209 aa).

Positions 30–209 (DHEPEIIYLV…IQTEFNKIFK (180 aa)) constitute a BPL/LPL catalytic domain. Residues 69 to 76 (RGGKFTFH), 143 to 145 (AIG), and 156 to 158 (GVA) contribute to the substrate site. Catalysis depends on C174, which acts as the Acyl-thioester intermediate.

It belongs to the LipB family.

The protein resides in the cytoplasm. The catalysed reaction is octanoyl-[ACP] + L-lysyl-[protein] = N(6)-octanoyl-L-lysyl-[protein] + holo-[ACP] + H(+). It functions in the pathway protein modification; protein lipoylation via endogenous pathway; protein N(6)-(lipoyl)lysine from octanoyl-[acyl-carrier-protein]: step 1/2. In terms of biological role, catalyzes the transfer of endogenously produced octanoic acid from octanoyl-acyl-carrier-protein onto the lipoyl domains of lipoate-dependent enzymes. Lipoyl-ACP can also act as a substrate although octanoyl-ACP is likely to be the physiological substrate. In Rickettsia peacockii (strain Rustic), this protein is Octanoyltransferase.